We begin with the raw amino-acid sequence, 153 residues long: Transcriptional repressor NrdR (153 aa).

A zinc finger lies at 3 to 34; the sequence is CPSCQHHGTRVLDSRPVDEGRSIRRRRECEQC. The region spanning 49–139 is the ATP-cone domain; the sequence is LIVVKKQGMR…VYRQFKDLNV (91 aa).

The protein belongs to the NrdR family. Requires Zn(2+) as cofactor.

Negatively regulates transcription of bacterial ribonucleotide reductase nrd genes and operons by binding to NrdR-boxes. The chain is Transcriptional repressor NrdR from Geobacillus sp. (strain WCH70).